We begin with the raw amino-acid sequence, 87 residues long: Phosphocarrier protein HPr (87 aa).

The region spanning 1–87 is the HPr domain; it reads MEKIFKVTSD…ETMKNEGLGE (87 aa). Residue histidine 14 is the Pros-phosphohistidine intermediate; alternate of the active site. At histidine 14 the chain carries Tele-phosphohistidine; alternate. Serine 45 bears the Phosphoserine; by HPrK/P mark.

This sequence belongs to the HPr family. The form phosphorylated at the tele nitrogen (N(epsilon)2), instead of the expected pros nitrogen (N(delta)1), of His-14 is not able to transfer its phosphoryl group to the B.subtilis EIIA-Glc domain. This form may be inactive in PTS-catalyzed sugar transport or target an as yet unknown acceptor molecule in an alternative metabolic process.

The protein localises to the cytoplasm. With respect to regulation, phosphorylation on Ser-45 inhibits the phosphoryl transfer from enzyme I to HPr. General (non sugar-specific) component of the phosphoenolpyruvate-dependent sugar phosphotransferase system (sugar PTS). This major carbohydrate active-transport system catalyzes the phosphorylation of incoming sugar substrates concomitantly with their translocation across the cell membrane. The phosphoryl group from phosphoenolpyruvate (PEP) is transferred to the phosphoryl carrier protein HPr by enzyme I. Phospho-HPr then transfers it to the PTS EIIA domain. Functionally, P-Ser-HPr interacts with the catabolite control protein A (CcpA), forming a complex that binds to DNA at the catabolite response elements cre, operator sites preceding a large number of catabolite-regulated genes. Thus, P-Ser-HPr is a corepressor in carbon catabolite repression (CCR), a mechanism that allows bacteria to coordinate and optimize the utilization of available carbon sources. P-Ser-HPr mediates glucose catabolite repression of cry4A toxin expression. This Bacillus thuringiensis subsp. israelensis protein is Phosphocarrier protein HPr (ptsH).